The sequence spans 315 residues: Olfactory receptor 2T5 (315 aa).

Topologically, residues 1–29 (MANITRMANHTGKLDFILMGLFRRSKHPA) are extracellular. 2 N-linked (GlcNAc...) asparagine glycosylation sites follow: Asn-3 and Asn-9. The chain crosses the membrane as a helical span at residues 30–53 (LLSVVIFVVFLKALSGNAVLILLI). The Cytoplasmic portion of the chain corresponds to 54-61 (HCDAHLHS). The chain crosses the membrane as a helical span at residues 62–83 (PMYFFISQLSLMDMAYISVTVP). Over 84–104 (KMLLDQVMGVNKVSAPECGMQ) the chain is Extracellular. A disulfide bond links Cys-101 and Cys-193. The helical transmembrane segment at 105 to 124 (MFLYLTLAGSEFFLLATMAY) threads the bilayer. At 125-143 (DRYVAICHPLRYPVLMNHR) the chain is on the cytoplasmic side. Residues 144 to 162 (VCLFLASGCWFLGSVDGFM) form a helical membrane-spanning segment. Over 163 to 199 (LTPITMSFPFCRSWEIHHFFCEVPAVTILSCSDTSLY) the chain is Extracellular. The helical transmembrane segment at 200–223 (ETLMYLCCVLMLLIPVTIISSSYL) threads the bilayer. The Cytoplasmic segment spans residues 224–240 (LILLTVHRMNSAEGRKK). The helical transmembrane segment at 241–263 (AFATCSSHLTVVILFYGAAVYTY) threads the bilayer. Residues 264 to 276 (MLPSSYHTPEKDM) lie on the Extracellular side of the membrane. Residues 277–296 (MVSVFYTILTPVLNPLIYSL) traverse the membrane as a helical segment. At 297–315 (RNKDVMGALKKMLTVRFVL) the chain is on the cytoplasmic side.

Belongs to the G-protein coupled receptor 1 family.

It is found in the cell membrane. Functionally, odorant receptor. The polypeptide is Olfactory receptor 2T5 (OR2T5) (Homo sapiens (Human)).